The following is a 347-amino-acid chain: S-adenosylmethionine:tRNA ribosyltransferase-isomerase (347 aa).

Belongs to the QueA family. As to quaternary structure, monomer.

It localises to the cytoplasm. The catalysed reaction is 7-aminomethyl-7-carbaguanosine(34) in tRNA + S-adenosyl-L-methionine = epoxyqueuosine(34) in tRNA + adenine + L-methionine + 2 H(+). It participates in tRNA modification; tRNA-queuosine biosynthesis. Its function is as follows. Transfers and isomerizes the ribose moiety from AdoMet to the 7-aminomethyl group of 7-deazaguanine (preQ1-tRNA) to give epoxyqueuosine (oQ-tRNA). The sequence is that of S-adenosylmethionine:tRNA ribosyltransferase-isomerase from Xylella fastidiosa (strain 9a5c).